Here is a 269-residue protein sequence, read N- to C-terminus: MLLLSVNPPLFIPFIVAGDPSPEVTVDLALALEEAGADLLELGVPYSDPLADGPTIQRAAARALAGNMTLPKAIHLVAEMRKKGVTIPIILFTYYNPVLQLGEESFFALARENGANGVLIPDLPFEESGPLRELGERFDLPLISLVAPTSKQRIERIASVAQGFLYCVSSLGVTGMRETLPESLGDFVSEVKRHSRVPVAVGFGISTPEQVAMLKEVCDGVVIGSALVQKVEQLGERLLAPEEKEAAIAEFAAYARSLAAPLHAPCSLR.

Active-site proton acceptor residues include Glu41 and Asp52.

The protein belongs to the TrpA family. In terms of assembly, tetramer of two alpha and two beta chains.

It carries out the reaction (1S,2R)-1-C-(indol-3-yl)glycerol 3-phosphate + L-serine = D-glyceraldehyde 3-phosphate + L-tryptophan + H2O. The protein operates within amino-acid biosynthesis; L-tryptophan biosynthesis; L-tryptophan from chorismate: step 5/5. In terms of biological role, the alpha subunit is responsible for the aldol cleavage of indoleglycerol phosphate to indole and glyceraldehyde 3-phosphate. This chain is Tryptophan synthase alpha chain, found in Geobacillus stearothermophilus (Bacillus stearothermophilus).